Here is a 469-residue protein sequence, read N- to C-terminus: MIGFKSFFMRTIIFQVLAILLLWGLLVAWVKYWYYPDMEKYFDNQQRIVAAGIANILDETGTDNIDYRGIIKTIEGMYIDSINNGMQDEIDYHPLFVVYDRDNRVLYSSQTQGEPLRLPPSVLSGSVNYAGANWHLAGSWKEKRQYRVIVGESFNDRTTLFGNPADVPLLGILAAIIVTLLFTAYFSLRPLRQIARTISDRQPGNLSPINVSEQYQEIRPVVMEVNKLMARIDAANQREKRFMADAAHELRTPIAAVLAQLHLLTQVTEQQERREIIGDMQQGLDRAASLSRQLINLAKLEAEDFPLKIEAVDIYAEIGKCIAQHVPYALEKDVELSLDGSEDVVVSTDRRALIAIFTNLLDNALKYAPPGSRIEANIRSLAPLGCYITLRDNGPGVSEEHRSRLFERFYRVPGTQQTGSGLGLAIARNLADKIGAQLRVTEGLDDRGIGFIIDLPESYRPQTESEPRP.

Transmembrane regions (helical) follow at residues 12–32 (IIFQ…WVKY) and 167–187 (VPLL…AYFS). Positions 245–459 (DAAHELRTPI…GFIIDLPESY (215 aa)) constitute a Histidine kinase domain. The residue at position 248 (His248) is a Phosphohistidine; by autocatalysis.

It is found in the cell inner membrane. It catalyses the reaction ATP + protein L-histidine = ADP + protein N-phospho-L-histidine.. Functionally, member of the two-component regulatory system RssA/RssB involved in regulation of swarming motility which has been shown to be inhibited by saturated fatty acids. RssA/RssB regulates cellular fatty acid composition, hemolysin production and cell surface topography. RssA/RssB negatively regulates the activity of SlhBA. It can also act as a negative regulator for the control of the swarming initiation. This chain is Swarming motility regulation sensor protein RssA (rssA), found in Serratia marcescens.